The chain runs to 836 residues: uncharacterized protein (836 aa).

3 disordered regions span residues 1–25 (MDST…NEEE), 692–718 (DSRS…NNQR), and 789–836 (ESSG…GYAS). Composition is skewed to polar residues over residues 789–799 (ESSGINVSNTR) and 825–836 (IDSSSAQNGYAS).

It is found in the nucleus. This is an uncharacterized protein from Schizosaccharomyces pombe (strain 972 / ATCC 24843) (Fission yeast).